The primary structure comprises 171 residues: 3-hydroxydecanoyl-[acyl-carrier-protein] dehydratase (171 aa).

The active site involves H70.

Belongs to the thioester dehydratase family. FabA subfamily. Homodimer.

It is found in the cytoplasm. It catalyses the reaction a (3R)-hydroxyacyl-[ACP] = a (2E)-enoyl-[ACP] + H2O. It carries out the reaction (3R)-hydroxydecanoyl-[ACP] = (2E)-decenoyl-[ACP] + H2O. The enzyme catalyses (2E)-decenoyl-[ACP] = (3Z)-decenoyl-[ACP]. The protein operates within lipid metabolism; fatty acid biosynthesis. Its function is as follows. Necessary for the introduction of cis unsaturation into fatty acids. Catalyzes the dehydration of (3R)-3-hydroxydecanoyl-ACP to E-(2)-decenoyl-ACP and then its isomerization to Z-(3)-decenoyl-ACP. Can catalyze the dehydratase reaction for beta-hydroxyacyl-ACPs with saturated chain lengths up to 16:0, being most active on intermediate chain length. The protein is 3-hydroxydecanoyl-[acyl-carrier-protein] dehydratase of Pseudomonas syringae pv. syringae (strain B728a).